Reading from the N-terminus, the 239-residue chain is ATP-dependent dethiobiotin synthetase BioD (239 aa).

Residue 15-20 (EIGKTF) coordinates ATP. Residue Thr-19 coordinates Mg(2+). Lys-40 is an active-site residue. Residues Asp-57, 118–121 (EGVG), and 178–179 (NH) contribute to the ATP site. Mg(2+) is bound by residues Asp-57 and Glu-118.

It belongs to the dethiobiotin synthetase family. As to quaternary structure, homodimer. It depends on Mg(2+) as a cofactor.

Its subcellular location is the cytoplasm. The enzyme catalyses (7R,8S)-7,8-diammoniononanoate + CO2 + ATP = (4R,5S)-dethiobiotin + ADP + phosphate + 3 H(+). It participates in cofactor biosynthesis; biotin biosynthesis; biotin from 7,8-diaminononanoate: step 1/2. Catalyzes a mechanistically unusual reaction, the ATP-dependent insertion of CO2 between the N7 and N8 nitrogen atoms of 7,8-diaminopelargonic acid (DAPA, also called 7,8-diammoniononanoate) to form a ureido ring. This is ATP-dependent dethiobiotin synthetase BioD from Burkholderia orbicola (strain MC0-3).